The following is a 103-amino-acid chain: Large ribosomal subunit protein bL21 (103 aa).

Belongs to the bacterial ribosomal protein bL21 family. As to quaternary structure, part of the 50S ribosomal subunit. Contacts protein L20.

This protein binds to 23S rRNA in the presence of protein L20. The sequence is that of Large ribosomal subunit protein bL21 from Actinobacillus pleuropneumoniae serotype 7 (strain AP76).